Reading from the N-terminus, the 689-residue chain is Methionine--tRNA ligase (689 aa).

Positions 15–25 (PYANGPIHLGH) match the 'HIGH' region motif. The Zn(2+) site is built by Cys-146, Cys-149, Cys-159, and Cys-162. Residues 332 to 336 (KMSKS) carry the 'KMSKS' region motif. Lys-335 is an ATP binding site. The 102-residue stretch at 588–689 (DFAKIDLRIA…EGAQPGMRVK (102 aa)) folds into the tRNA-binding domain.

The protein belongs to the class-I aminoacyl-tRNA synthetase family. MetG type 1 subfamily. In terms of assembly, homodimer. Zn(2+) serves as cofactor.

It is found in the cytoplasm. The catalysed reaction is tRNA(Met) + L-methionine + ATP = L-methionyl-tRNA(Met) + AMP + diphosphate. Is required not only for elongation of protein synthesis but also for the initiation of all mRNA translation through initiator tRNA(fMet) aminoacylation. This is Methionine--tRNA ligase from Shewanella baltica (strain OS155 / ATCC BAA-1091).